The sequence spans 430 residues: Shufflon protein A' (430 aa).

The constant region stretch occupies residues 1 to 361 (MKKYDRGWAS…TGAILSCQSG (361 aa)). Residues 362–430 (TWGTIGGKLK…GCIASCVTLN (69 aa)) are variable region.

This chain is Shufflon protein A', found in Escherichia coli.